The following is a 1235-amino-acid chain: ATP-dependent helicase/nuclease subunit A (1235 aa).

One can recognise a UvrD-like helicase ATP-binding domain in the interval 12–482 (ALWTDDQWKA…IDLSQNFRSR (471 aa)). Residue 33-40 (AAAGSGKT) coordinates ATP. The 292-residue stretch at 509 to 800 (AAELTLGASF…RMMTIHASKG (292 aa)) folds into the UvrD-like helicase C-terminal domain.

The protein belongs to the helicase family. AddA subfamily. As to quaternary structure, heterodimer of AddA and AddB/RexB. Mg(2+) is required as a cofactor.

It catalyses the reaction Couples ATP hydrolysis with the unwinding of duplex DNA by translocating in the 3'-5' direction.. The enzyme catalyses ATP + H2O = ADP + phosphate + H(+). Functionally, the heterodimer acts as both an ATP-dependent DNA helicase and an ATP-dependent, dual-direction single-stranded exonuclease. Recognizes the chi site generating a DNA molecule suitable for the initiation of homologous recombination. The AddA nuclease domain is required for chi fragment generation; this subunit has the helicase and 3' -&gt; 5' nuclease activities. In Listeria innocua serovar 6a (strain ATCC BAA-680 / CLIP 11262), this protein is ATP-dependent helicase/nuclease subunit A.